Reading from the N-terminus, the 164-residue chain is Vasopressin-neurophysin 2-copeptin (164 aa).

An N-terminal signal peptide occupies residues 1 to 19 (MPDTMLPACFLGLLAFSSA). An intrachain disulfide couples C20 to C25. Residue G28 is modified to Glycine amide. 7 cysteine pairs are disulfide-bonded: C41–C85, C44–C58, C52–C75, C59–C65, C92–C104, C98–C116, and C105–C110. A glycan (N-linked (GlcNAc...) asparagine) is linked at N131.

This sequence belongs to the vasopressin/oxytocin family. As to quaternary structure, interacts with vasopressin receptors V1bR/AVPR1B (Ki=85 pM), V1aR/AVPR1A (Ki=0.6 nM) and V2R/AVPR2 (Ki=4.9 nM). Interacts with oxytocin receptor (OXTR) (Ki=110 nM). (Microbial infection) May interact with SARS coronavirus-2/SARS-CoV-2; they may form a complex with secreted ACE2.

The protein resides in the secreted. Its function is as follows. Specifically binds vasopressin. Has a direct antidiuretic action on the kidney, it also causes vasoconstriction of the peripheral vessels. Acts by binding to vasopressin receptors (V1bR/AVPR1B, V1aR/AVPR1A, and V2R/AVPR2). This chain is Vasopressin-neurophysin 2-copeptin (AVP), found in Homo sapiens (Human).